A 469-amino-acid chain; its full sequence is ATP synthase subunit beta (469 aa).

An ATP-binding site is contributed by Gly156–Thr163.

Belongs to the ATPase alpha/beta chains family. F-type ATPases have 2 components, CF(1) - the catalytic core - and CF(0) - the membrane proton channel. CF(1) has five subunits: alpha(3), beta(3), gamma(1), delta(1), epsilon(1). CF(0) has three main subunits: a(1), b(2) and c(9-12). The alpha and beta chains form an alternating ring which encloses part of the gamma chain. CF(1) is attached to CF(0) by a central stalk formed by the gamma and epsilon chains, while a peripheral stalk is formed by the delta and b chains.

Its subcellular location is the cell membrane. It carries out the reaction ATP + H2O + 4 H(+)(in) = ADP + phosphate + 5 H(+)(out). Produces ATP from ADP in the presence of a proton gradient across the membrane. The catalytic sites are hosted primarily by the beta subunits. The chain is ATP synthase subunit beta from Bacillus cereus (strain AH820).